Reading from the N-terminus, the 180-residue chain is Large ribosomal subunit protein bL19 (180 aa).

The protein belongs to the bacterial ribosomal protein bL19 family.

In terms of biological role, this protein is located at the 30S-50S ribosomal subunit interface and may play a role in the structure and function of the aminoacyl-tRNA binding site. This Allorhizobium ampelinum (strain ATCC BAA-846 / DSM 112012 / S4) (Agrobacterium vitis (strain S4)) protein is Large ribosomal subunit protein bL19.